The following is a 461-amino-acid chain: Steroidogenic factor 1 (461 aa).

The segment at residues 10 to 85 (DELCPVCGDK…VGMRLEAVRA (76 aa)) is a DNA-binding region (nuclear receptor). An NR C4-type zinc finger spans residues 13–33 (CPVCGDKVSGYHYGLLTCESC). Lys34, Lys38, and Lys72 each carry N6-acetyllysine. An NR C4-type zinc finger spans residues 49–73 (CTESQSCKIDKTQRKRCPFCRFQKC). Residue Lys119 forms a Glycyl lysine isopeptide (Lys-Gly) (interchain with G-Cter in SUMO) linkage. Positions 119–157 (KLETGPPMGVPPPPPPAPDYVLPPSLHGPEPKGLAAGPP) are disordered. Positions 126–136 (MGVPPPPPPAP) are enriched in pro residues. A Glycyl lysine isopeptide (Lys-Gly) (interchain with G-Cter in SUMO) cross-link involves residue Lys194. Ser203 is subject to Phosphoserine; by CDK7. The 238-residue stretch at 222 to 459 (NVPELILQLL…NLLIEMLQAK (238 aa)) folds into the NR LBD domain. The interval 230 to 461 (LLQLEPDEDQ…LIEMLQAKQT (232 aa)) is important for dimerization. Gly341, Tyr436, and Lys440 together coordinate a 1,2-diacyl-sn-glycero-3-phosphocholine. A 1,2-diacylglycero-3-phosphoethanolamine-binding residues include Gly341, Tyr436, and Lys440.

It belongs to the nuclear hormone receptor family. NR5 subfamily. In terms of assembly, binds DNA as a monomer. Interacts with NR0B2 and PPARGC1A. Part of a complex consisting of SFPQ, NONO and NR5A1. Interacts with NCOA2. Interacts with DGKQ and CDK7. Binds to and activated by HIPK3. In terms of processing, acetylation stimulates the transcriptional activity. Sumoylation reduces CDK7-mediated phosphorylation on Ser-203. Post-translationally, phosphorylated on Ser-203 by CDK7. This phosphorylation promotes transcriptional activity. High expressed in the adrenal cortex, the ovary, the testis, and the spleen.

It localises to the nucleus. Functionally, transcriptional activator. Essential for sexual differentiation and formation of the primary steroidogenic tissues. Binds to the Ad4 site found in the promoter region of steroidogenic P450 genes such as CYP11A, CYP11B and CYP21B. Also regulates the AMH/Muellerian inhibiting substance gene as well as the AHCH and STAR genes. 5'-YCAAGGYC-3' and 5'-RRAGGTCA-3' are the consensus sequences for the recognition by NR5A1. The SFPQ-NONO-NR5A1 complex binds to the CYP17 promoter and regulates basal and cAMP-dependent transcriptional activity. Binds phosphatidylcholine. Binds phospholipids with a phosphatidylinositol (PI) headgroup, in particular PI(3,4)P2 and PI(3,4,5)P3. Activated by the phosphorylation of NR5A1 by HIPK3 leading to increased steroidogenic gene expression upon cAMP signaling pathway stimulation. The chain is Steroidogenic factor 1 (NR5A1) from Homo sapiens (Human).